The following is a 421-amino-acid chain: Histidine--tRNA ligase (421 aa).

Belongs to the class-II aminoacyl-tRNA synthetase family. In terms of assembly, homodimer.

It is found in the cytoplasm. The catalysed reaction is tRNA(His) + L-histidine + ATP = L-histidyl-tRNA(His) + AMP + diphosphate + H(+). The polypeptide is Histidine--tRNA ligase (Nitrosomonas eutropha (strain DSM 101675 / C91 / Nm57)).